Consider the following 325-residue polypeptide: Peroxidase 1 (325 aa).

Positions 1 to 21 (MAIKNILALVVLLSVVGVSVA) are cleaved as a signal peptide. Disulfide bonds link C35–C113, C68–C73, C119–C321, and C198–C230. H66 acts as the Proton acceptor in catalysis. Residues D67, V70, G72, D74, and S76 each coordinate Ca(2+). P161 contributes to the substrate binding site. A heme b-binding site is contributed by H191. T192 contacts Ca(2+). Residue N207 is glycosylated (N-linked (GlcNAc...) asparagine). Ca(2+) contacts are provided by D242, S245, and D250.

It belongs to the peroxidase family. Classical plant (class III) peroxidase subfamily. Heme b is required as a cofactor. Ca(2+) serves as cofactor. Slightly expressed in roots.

The protein resides in the secreted. The enzyme catalyses 2 a phenolic donor + H2O2 = 2 a phenolic radical donor + 2 H2O. Functionally, removal of H(2)O(2), oxidation of toxic reductants, biosynthesis and degradation of lignin, suberization, auxin catabolism, response to environmental stresses such as wounding, pathogen attack and oxidative stress. These functions might be dependent on each isozyme/isoform in each plant tissue. The chain is Peroxidase 1 (PER1) from Arabidopsis thaliana (Mouse-ear cress).